Here is a 466-residue protein sequence, read N- to C-terminus: Asparagine--tRNA ligase (466 aa).

This sequence belongs to the class-II aminoacyl-tRNA synthetase family. Homodimer.

It localises to the cytoplasm. It carries out the reaction tRNA(Asn) + L-asparagine + ATP = L-asparaginyl-tRNA(Asn) + AMP + diphosphate + H(+). In Shewanella baltica (strain OS185), this protein is Asparagine--tRNA ligase.